We begin with the raw amino-acid sequence, 157 residues long: Ribosome-binding factor A (157 aa).

The disordered stretch occupies residues 126–157 (RARATAQYAGDADPYKHDDEPSDDFEDDSDEE). Acidic residues predominate over residues 145–157 (EPSDDFEDDSDEE).

The protein belongs to the RbfA family. In terms of assembly, monomer. Binds 30S ribosomal subunits, but not 50S ribosomal subunits or 70S ribosomes.

It localises to the cytoplasm. One of several proteins that assist in the late maturation steps of the functional core of the 30S ribosomal subunit. Associates with free 30S ribosomal subunits (but not with 30S subunits that are part of 70S ribosomes or polysomes). Required for efficient processing of 16S rRNA. May interact with the 5'-terminal helix region of 16S rRNA. The polypeptide is Ribosome-binding factor A (Bifidobacterium longum (strain DJO10A)).